An 84-amino-acid chain; its full sequence is Beta-cardiotoxin CTX27 (84 aa).

An N-terminal signal peptide occupies residues 1 to 21 (MKTLLLTLVVVTIVCLDLGYT). 4 disulfides stabilise this stretch: C24/C43, C36/C61, C65/C76, and C77/C82.

This sequence belongs to the three-finger toxin family. Short-chain subfamily. Aminergic toxin sub-subfamily. In terms of tissue distribution, expressed by the venom gland.

The protein resides in the secreted. In terms of biological role, acts as a beta-blocker by binding to beta-1 and beta-2 adrenergic receptors (ADRB1 and ADRB2). It dose-dependently decreases the heart rate (bradycardia), whereas conventional cardiotoxins increases it. At 100 mg/kg, intraperitoneal injection into mice provokes labored breathing, impaired locomotion, lack of response to external stimuli, and death (after 30 minutes). This chain is Beta-cardiotoxin CTX27, found in Ophiophagus hannah (King cobra).